A 152-amino-acid chain; its full sequence is Large ribosomal subunit protein bL9 (152 aa).

Residues Gln-41–Glu-61 are disordered. Over residues Ala-49 to Glu-61 the composition is skewed to basic and acidic residues.

Belongs to the bacterial ribosomal protein bL9 family.

Binds to the 23S rRNA. This is Large ribosomal subunit protein bL9 from Levilactobacillus brevis (strain ATCC 367 / BCRC 12310 / CIP 105137 / JCM 1170 / LMG 11437 / NCIMB 947 / NCTC 947) (Lactobacillus brevis).